The chain runs to 336 residues: GTPase Obg (336 aa).

The 159-residue stretch at 1-159 (MKFIDEATII…RRLQLELILL (159 aa)) folds into the Obg domain. In terms of domain architecture, OBG-type G spans 160–333 (ADVGLLGLPN…LCRDIMLFIN (174 aa)). Residues 166–173 (GLPNVGKS), 191–195 (FTTLV), 213–216 (DIPG), 283–286 (NKLD), and 314–316 (SAM) each bind GTP. Mg(2+)-binding residues include S173 and T193.

Belongs to the TRAFAC class OBG-HflX-like GTPase superfamily. OBG GTPase family. In terms of assembly, monomer. Requires Mg(2+) as cofactor.

It localises to the cytoplasm. An essential GTPase which binds GTP, GDP and possibly (p)ppGpp with moderate affinity, with high nucleotide exchange rates and a fairly low GTP hydrolysis rate. Plays a role in control of the cell cycle, stress response, ribosome biogenesis and in those bacteria that undergo differentiation, in morphogenesis control. The polypeptide is GTPase Obg (Baumannia cicadellinicola subsp. Homalodisca coagulata).